Consider the following 379-residue polypeptide: RIB43A-like with coiled-coils protein 1 (379 aa).

The segment at Met1–Asn21 is disordered. Residues Asp9–Asn21 are compositionally biased toward basic and acidic residues. 3 coiled-coil regions span residues Ala85–Phe111, Arg161–Leu241, and Glu280–Lys304.

Belongs to the RIB43A family. Microtubule inner protein component of sperm flagellar doublet microtubules.

The protein resides in the cytoplasm. It is found in the cytoskeleton. It localises to the flagellum axoneme. The polypeptide is RIB43A-like with coiled-coils protein 1 (RIBC1) (Macaca fascicularis (Crab-eating macaque)).